The primary structure comprises 500 residues: MLINEEKERREKLNYIKKHGYNFPNDFKPKNNFSDLTQRYKDYTRDQLFSLKICVSVAGRMTNKRIMGKSSFFILKDFEGEIQLYIQENLFALNFYKQFVKKWDLGDILGAKGKLFKTRTGELSIHCTEIKLLTKALKPLPSKFHGLSDQETRYRQRYLDLISNRTLCSIFKIRSLIFINIRKYMLKKKFLEVETPMMQNIPGGASARPFITHHNTLEIDLYLRISPELYLKRLIVGGFNKIFEINKSFRNEGISTRHNPEFTMMEVYMAYSNYHDMMNFTEKLLMFLVKEIVGNSQVKHGTNIIDFKKKFFRCTLKEAILKYNPSIRLSDLNDEVKMNKIVKKLGINVKKKLNAGQLILEIFNKTVEKKLIQPTFILDYPVEVSPLSRRSDVNKNVVDRFELFISGYEIGNGFSELNDADDQKKRFLMQCKLSHNINNLNKISSFDKHILYDSDYITALEYGLPPTSGLGIGIDRLTMLLTNQKSIRDVIFFPILKPSV.

Residues Glu402 and Glu409 each contribute to the Mg(2+) site.

Belongs to the class-II aminoacyl-tRNA synthetase family. As to quaternary structure, homodimer. The cofactor is Mg(2+).

It is found in the cytoplasm. The catalysed reaction is tRNA(Lys) + L-lysine + ATP = L-lysyl-tRNA(Lys) + AMP + diphosphate. In Buchnera aphidicola subsp. Baizongia pistaciae (strain Bp), this protein is Lysine--tRNA ligase.